A 542-amino-acid polypeptide reads, in one-letter code: Putative DEAD-box ATP-dependent RNA helicase 43 (542 aa).

The Q motif motif lies at 97–125 (KNFMDMKFPSPLLRMLKDKGIMHPTPIQV). Residues 128–312 (LPVVLSGRDM…TSALVKPVTV (185 aa)) enclose the Helicase ATP-binding domain. Position 141-148 (141-148 (AFTGSGKT)) interacts with ATP. A DEAD box motif is present at residues 260-263 (DEAD). The Helicase C-terminal domain occupies 323-483 (DVIQEVEYVK…RIPPVLAELN (161 aa)). A CCHC-type zinc finger spans residues 499-516 (KGCAYCGGLGHRILQCPK).

Belongs to the DEAD box helicase family. DDX41 subfamily.

The enzyme catalyses ATP + H2O = ADP + phosphate + H(+). This Arabidopsis thaliana (Mouse-ear cress) protein is Putative DEAD-box ATP-dependent RNA helicase 43 (RH43).